A 504-amino-acid chain; its full sequence is 2,3-bisphosphoglycerate-independent phosphoglycerate mutase (504 aa).

Residues aspartate 13 and serine 63 each coordinate Mn(2+). Serine 63 acts as the Phosphoserine intermediate in catalysis. Substrate is bound by residues histidine 124, 153–154 (RD), arginine 183, arginine 189, 254–257 (RADR), and lysine 330. Aspartate 397, histidine 401, aspartate 438, histidine 439, and histidine 457 together coordinate Mn(2+).

Belongs to the BPG-independent phosphoglycerate mutase family. Monomer. Mn(2+) serves as cofactor.

It catalyses the reaction (2R)-2-phosphoglycerate = (2R)-3-phosphoglycerate. It functions in the pathway carbohydrate degradation; glycolysis; pyruvate from D-glyceraldehyde 3-phosphate: step 3/5. Its function is as follows. Catalyzes the interconversion of 2-phosphoglycerate and 3-phosphoglycerate. In Rhodopseudomonas palustris (strain ATCC BAA-98 / CGA009), this protein is 2,3-bisphosphoglycerate-independent phosphoglycerate mutase.